A 101-amino-acid polypeptide reads, in one-letter code: Small ribosomal subunit protein uS10 (101 aa).

The protein belongs to the universal ribosomal protein uS10 family. In terms of assembly, part of the 30S ribosomal subunit.

In terms of biological role, involved in the binding of tRNA to the ribosomes. In Methanocaldococcus jannaschii (strain ATCC 43067 / DSM 2661 / JAL-1 / JCM 10045 / NBRC 100440) (Methanococcus jannaschii), this protein is Small ribosomal subunit protein uS10.